The primary structure comprises 127 residues: CST complex subunit TEN1 (127 aa).

The protein belongs to the TEN1 family. In terms of assembly, component of the CST complex, composed of CTC1, TEN1 and STN1. Interacts with STN1. No interaction with POT1A, but competes with it for STN1 binding. As to expression, ubiquitous. High expression in meristematic tissues and in vasculature.

Its subcellular location is the nucleus. It is found in the chromosome. The protein resides in the telomere. Functionally, required for the maintenance of meristems and stem cells through the reduction of DNA damage. Promotes telomere integrity by maintaining telomere length and proper architecture of the chromosome terminus. Negatively regulates telomerase repeat addition processivity. Hampers contacts between enzymatically active telomerase and CST complex. This is CST complex subunit TEN1 from Arabidopsis thaliana (Mouse-ear cress).